The following is a 415-amino-acid chain: Multifunctional CCA protein (415 aa).

Positions 8 and 11 each coordinate ATP. CTP is bound by residues G8 and R11. Residues D21 and D23 each coordinate Mg(2+). 3 residues coordinate ATP: R91, R137, and R140. CTP-binding residues include R91, R137, and R140. The region spanning 228–329 is the HD domain; it reads TGIHTLMTLA…VGLFDSIDAW (102 aa).

The protein belongs to the tRNA nucleotidyltransferase/poly(A) polymerase family. Bacterial CCA-adding enzyme type 1 subfamily. In terms of assembly, monomer. Can also form homodimers and oligomers. Mg(2+) serves as cofactor. It depends on Ni(2+) as a cofactor.

The enzyme catalyses a tRNA precursor + 2 CTP + ATP = a tRNA with a 3' CCA end + 3 diphosphate. The catalysed reaction is a tRNA with a 3' CCA end + 2 CTP + ATP = a tRNA with a 3' CCACCA end + 3 diphosphate. Functionally, catalyzes the addition and repair of the essential 3'-terminal CCA sequence in tRNAs without using a nucleic acid template. Adds these three nucleotides in the order of C, C, and A to the tRNA nucleotide-73, using CTP and ATP as substrates and producing inorganic pyrophosphate. tRNA 3'-terminal CCA addition is required both for tRNA processing and repair. Also involved in tRNA surveillance by mediating tandem CCA addition to generate a CCACCA at the 3' terminus of unstable tRNAs. While stable tRNAs receive only 3'-terminal CCA, unstable tRNAs are marked with CCACCA and rapidly degraded. This Cronobacter sakazakii (strain ATCC BAA-894) (Enterobacter sakazakii) protein is Multifunctional CCA protein.